A 278-amino-acid chain; its full sequence is Esterase dbaE (278 aa).

Catalysis depends on charge relay system residues Ser-124, Asp-220, and His-248.

It belongs to the LovG family.

It functions in the pathway secondary metabolite biosynthesis. Esterase; part of the gene cluster that mediates the biosynthesis of the antibiotic 2,4-dihydroxy-3-methyl-6-(2-oxopropyl)benzaldehyde (DHMBA) and its derivatives. The direct non-reducing polyketide synthase dbaI product is 2,4-dihydroxy-3-methyl-6-(2-oxopropyl)benzaldehyde (DHMBA), produced by condensation of one acetyl-CoA starter unit with 4 malonyl-CoA units and one methylation step. The FAD-dependent monooxygenase dbaH is responsible for the synthesis of yellow pigments derived from the oxidation of DHMBA. The roles of dbaB, C, E and F have still to be determined. The polypeptide is Esterase dbaE (Emericella nidulans (strain FGSC A4 / ATCC 38163 / CBS 112.46 / NRRL 194 / M139) (Aspergillus nidulans)).